The sequence spans 71 residues: UPF0346 protein SPT_1257 (71 aa).

Belongs to the UPF0346 family.

The protein is UPF0346 protein SPT_1257 of Streptococcus pneumoniae (strain Taiwan19F-14).